A 63-amino-acid chain; its full sequence is Lantibiotic mutacin-1140 (63 aa).

Residues 1 to 41 constitute a propeptide that is removed on maturation; sequence MSNTQLLEVLGTETFDVQEDLFAFDTTDTTIVASNDDPDTR. The segment at residues 44–48 is a cross-link (lanthionine (Ser-Cys)); that stretch reads SWSLC. Ser46 carries the post-translational modification 2,3-didehydroalanine (Ser). The beta-methyllanthionine (Thr-Cys) cross-link spans 49–52; sequence TPGC. A 2,3-didehydrobutyrine modification is found at Thr55. Residues 57–62 constitute a cross-link (lanthionine (Ser-Cys)); the sequence is SFNSYC. Positions 60–63 form a cross-link, S-(2-aminovinyl)-D-cysteine (Ser-Cys); sequence SYCC.

Belongs to the type A lantibiotic family. In terms of processing, maturation of lantibiotics involves the enzymatic conversion of Thr, and Ser into dehydrated AA and the formation of thioether bonds with cysteine. The C-terminal lanthionine undergoes decarboxylation. This is followed by membrane translocation and cleavage of the modified precursor. The structure of the 2,3-didehydrobutyrine is not discussed in PubMed:11082191.

Functionally, lanthionine-containing peptide antibiotic (lantibiotic) active on Gram-positive bacteria. The bactericidal activity of lantibiotics is based on depolarization of energized bacterial cytoplasmic membranes, initiated by the formation of aqueous transmembrane pores. The chain is Lantibiotic mutacin-1140 (lanA) from Streptococcus mutans.